The sequence spans 441 residues: Amino-acid acetyltransferase (441 aa).

An N-acetyltransferase domain is found at E295 to S434.

Belongs to the acetyltransferase family. ArgA subfamily. As to quaternary structure, homohexamer.

The protein localises to the cytoplasm. The enzyme catalyses L-glutamate + acetyl-CoA = N-acetyl-L-glutamate + CoA + H(+). Its pathway is amino-acid biosynthesis; L-arginine biosynthesis; N(2)-acetyl-L-ornithine from L-glutamate: step 1/4. This is Amino-acid acetyltransferase from Serratia proteamaculans (strain 568).